Here is a 367-residue protein sequence, read N- to C-terminus: uncharacterized protein (367 aa).

This sequence belongs to the mimivirus L17x/L18x family.

This is an uncharacterized protein from Acanthamoeba polyphaga mimivirus (APMV).